The following is a 303-amino-acid chain: MIRQRTLKNTIRATGVGLHSGEKVYLTLRPAPVNTGIVFVRTDLDPVVQIAANAEYVTDTTLCTALSRDGVKVATVEHLMSAFAGLGIDNVFVELSAAEVPIMDGSAGPFVFLIQSAGIAEQGAPKKFIRIKREIVVEEDGKEARFLPHNGFKVAFAIDFDHPVFAHQKQTASVDFSTTSFVKEVSRARTFGFMRDLEHLRAQNLALGGSLDNAIVVDDYRIVNEGGLRYEDEFVKHKVLDAIGDLYQLGHSLIGEFRGVKSGHGLNNKLCRALMAQQDAWEIVTFEDDTQTAPISYAAPALA.

H78, H237, and D241 together coordinate Zn(2+). H264 functions as the Proton donor in the catalytic mechanism.

This sequence belongs to the LpxC family. Requires Zn(2+) as cofactor.

It carries out the reaction a UDP-3-O-[(3R)-3-hydroxyacyl]-N-acetyl-alpha-D-glucosamine + H2O = a UDP-3-O-[(3R)-3-hydroxyacyl]-alpha-D-glucosamine + acetate. Its pathway is glycolipid biosynthesis; lipid IV(A) biosynthesis; lipid IV(A) from (3R)-3-hydroxytetradecanoyl-[acyl-carrier-protein] and UDP-N-acetyl-alpha-D-glucosamine: step 2/6. Catalyzes the hydrolysis of UDP-3-O-myristoyl-N-acetylglucosamine to form UDP-3-O-myristoylglucosamine and acetate, the committed step in lipid A biosynthesis. The protein is UDP-3-O-acyl-N-acetylglucosamine deacetylase of Chromohalobacter salexigens (strain ATCC BAA-138 / DSM 3043 / CIP 106854 / NCIMB 13768 / 1H11).